Reading from the N-terminus, the 274-residue chain is Phosphatidylglycerol--prolipoprotein diacylglyceryl transferase (274 aa).

A run of 4 helical transmembrane segments spans residues 24–44 (WYALAYIVGLLGGWWYTRFLS), 60–80 (LLVWATLGTILGGRLGYVVFY), 96–116 (WHGGMSFHGGLVGVITATVLF), and 122–142 (LSVARVGDLVALVAPLGLFFG). Residue R143 participates in a 1,2-diacyl-sn-glycero-3-phospho-(1'-sn-glycerol) binding. 3 helical membrane passes run 182 to 202 (ATLEGLVLFCLLGLLWRFTAL), 207 to 227 (GQIIGLFLIGYGLSRITAEFF), and 241 to 261 (VTMGQILSLPMILAGIVVFVV).

Belongs to the Lgt family.

It localises to the cell inner membrane. The catalysed reaction is L-cysteinyl-[prolipoprotein] + a 1,2-diacyl-sn-glycero-3-phospho-(1'-sn-glycerol) = an S-1,2-diacyl-sn-glyceryl-L-cysteinyl-[prolipoprotein] + sn-glycerol 1-phosphate + H(+). Its pathway is protein modification; lipoprotein biosynthesis (diacylglyceryl transfer). Catalyzes the transfer of the diacylglyceryl group from phosphatidylglycerol to the sulfhydryl group of the N-terminal cysteine of a prolipoprotein, the first step in the formation of mature lipoproteins. This chain is Phosphatidylglycerol--prolipoprotein diacylglyceryl transferase, found in Rhodospirillum rubrum (strain ATCC 11170 / ATH 1.1.1 / DSM 467 / LMG 4362 / NCIMB 8255 / S1).